The chain runs to 100 residues: Dromyosuppressin (100 aa).

The first 24 residues, 1-24 (MSFAQFFVACCLAIVLLAVSNTRA), serve as a signal peptide directing secretion. Positions 25–84 (AVQGPPLCQSGIVEEMPPHIRKVCQALENSDQLTSALKSYINNEASALVANSDDLLKNYN) are excised as a propeptide. F96 carries the phenylalanine amide modification.

Belongs to the myosuppressin family.

It localises to the secreted. Functionally, myoinhibiting neuropeptide. The sequence is that of Dromyosuppressin from Drosophila melanogaster (Fruit fly).